Consider the following 209-residue polypeptide: Auxin-binding protein ABP19b (209 aa).

The first 18 residues, 1–18 (MIFPIFFTFFLLLSTSHA), serve as a signal peptide directing secretion. Cys-24 and Cys-39 are disulfide-bonded. Residues 53–199 (SGLGIAGNTT…TTLLDAPQIK (147 aa)) form the Cupin type-1 domain. The N-linked (GlcNAc...) asparagine glycan is linked to Asn-60. 4 residues coordinate Mn(2+): His-101, His-103, Glu-108, and His-147.

This sequence belongs to the germin family. Interacts with ABP20.

The protein resides in the secreted. The protein localises to the extracellular space. It localises to the apoplast. It is found in the cell wall. Functionally, probable receptor for the plant growth-promoting hormone auxin. This chain is Auxin-binding protein ABP19b (ABP19B), found in Prunus persica (Peach).